Consider the following 62-residue polypeptide: Large ribosomal subunit protein bL28 (62 aa).

The protein belongs to the bacterial ribosomal protein bL28 family.

The polypeptide is Large ribosomal subunit protein bL28 (Moorella thermoacetica (strain ATCC 39073 / JCM 9320)).